Here is a 386-residue protein sequence, read N- to C-terminus: 5-hydroxytryptamine receptor 1B (386 aa).

The Extracellular segment spans residues 1-42 (MEEQGIQCAPPPPAASQTGVPLVNLSHNCSAESHIYQDSIAL). N-linked (GlcNAc...) asparagine glycosylation is found at N24 and N28. The chain crosses the membrane as a helical span at residues 43 to 68 (PWKVLLVALLALITLATTLSNAFVIA). Residues 69–82 (TVYRTRKLHTPANY) lie on the Cytoplasmic side of the membrane. Residues 83-107 (LIASLAVTDLLVSILVMPVSTMYTV) form a helical membrane-spanning segment. The Extracellular portion of the chain corresponds to 108–115 (TGRWTLGQ). A helical transmembrane segment spans residues 116–141 (VVCDFWLSSDITCCTASIMHLCVIAL). An intrachain disulfide couples C118 to C195. Residues D125 and T130 each contribute to the ergotamine site. The short motif at 142–144 (DRY) is the DRY motif; important for ligand-induced conformation changes and signaling element. Topologically, residues 142-161 (DRYWAITDAVEYAAKRTPKR) are cytoplasmic. Residues 162–180 (AAIMIALVWVFSISISLPP) form a helical membrane-spanning segment. Residues 181-201 (FFWRQAKAEEEVLTCLVNTDH) are Extracellular-facing. V197 provides a ligand contact to ergotamine. A helical transmembrane segment spans residues 202–225 (VLYTVYSTGGAFYLPTLLLIALYG). The Cytoplasmic segment spans residues 226–311 (RIYVEARSRI…AARERKATKT (86 aa)). Over residues 255 to 268 (DSPGSTTSVTSINS) the composition is skewed to polar residues. Positions 255 to 278 (DSPGSTTSVTSINSRAPDLPSESG) are disordered. A helical transmembrane segment spans residues 312-333 (LGIILGAFIVCWLPFFIISLVM). Residues 334–343 (PICKDACWFH) are Extracellular-facing. The helical transmembrane segment at 344–366 (MATLDFFNWLGYLNSLINPIIYT) threads the bilayer. Positions 361–365 (NPIIY) match the NPxxY motif; important for ligand-induced conformation changes and signaling motif. The Cytoplasmic portion of the chain corresponds to 367 to 386 (MSNEDFKQAFHKLIRFKCAG). C384 carries S-palmitoyl cysteine lipidation.

The protein belongs to the G-protein coupled receptor 1 family. In terms of assembly, homodimer. Heterodimer with HTR1D. Phosphorylated. Desensitization of the receptor may be mediated by its phosphorylation. In terms of processing, palmitoylated.

It is found in the cell membrane. G-protein coupled receptor for 5-hydroxytryptamine (serotonin). Also functions as a receptor for ergot alkaloid derivatives, various anxiolytic and antidepressant drugs and other psychoactive substances, such as lysergic acid diethylamide (LSD). Ligand binding causes a conformation change that triggers signaling via guanine nucleotide-binding proteins (G proteins) and modulates the activity of downstream effectors, such as adenylate cyclase. HTR1B is coupled to G(i)/G(o) G alpha proteins and mediates inhibitory neurotransmission by inhibiting adenylate cyclase activity. Arrestin family members inhibit signaling via G proteins and mediate activation of alternative signaling pathways. Regulates the release of 5-hydroxytryptamine, dopamine and acetylcholine in the brain, and thereby affects neural activity, nociceptive processing, pain perception, mood and behavior. Besides, plays a role in vasoconstriction of cerebral arteries. The protein is 5-hydroxytryptamine receptor 1B (HTR1B) of Cricetulus griseus (Chinese hamster).